A 249-amino-acid polypeptide reads, in one-letter code: Probable transcriptional regulatory protein Meso_3192 (249 aa).

It belongs to the TACO1 family.

The protein resides in the cytoplasm. The chain is Probable transcriptional regulatory protein Meso_3192 from Chelativorans sp. (strain BNC1).